The following is a 440-amino-acid chain: P47(GAG-CRK) protein (440 aa).

The interval 1–208 (MEAVIKVISS…TPRGAEQPRA (208 aa)) is gag first part. A PPXY motif motif is present at residues 174–177 (PPPY). Residues 183–230 (YPSLAGVGEQQGQGGDTPRGAEQPRAGRGAGHRGLRRPAGRGQRVRPA) are disordered. The interval 209-437 (GRGAGHRGLR…PSSASVSTLT (229 aa)) is CRK. Residues 212–221 (AGHRGLRRPA) show a composition bias toward basic residues. Residues 248–354 (WYWGRLSRGD…LDTTTLIEPV (107 aa)) enclose the SH2 domain. In terms of domain architecture, SH3 spans 368 to 428 (EEVEYVRALF…PVPYVEKCRP (61 aa)). The interval 438-440 (GGR) is gag second part.

This is P47(GAG-CRK) protein from Avian sarcoma virus CT10 (Avian sarcoma virus (strain CT10)).